We begin with the raw amino-acid sequence, 155 residues long: Transcriptional repressor NrdR (155 aa).

Residues 3–34 (CPNCHQNASRVIDSRPTDEGRTIRRRRECENC) fold into a zinc finger. The 91-residue stretch at 49-139 (LLVIKNDGTR…IYRQFTDMSS (91 aa)) folds into the ATP-cone domain.

It belongs to the NrdR family. Zn(2+) serves as cofactor.

Functionally, negatively regulates transcription of bacterial ribonucleotide reductase nrd genes and operons by binding to NrdR-boxes. In Lactobacillus delbrueckii subsp. bulgaricus (strain ATCC 11842 / DSM 20081 / BCRC 10696 / JCM 1002 / NBRC 13953 / NCIMB 11778 / NCTC 12712 / WDCM 00102 / Lb 14), this protein is Transcriptional repressor NrdR.